Consider the following 201-residue polypeptide: Recombination protein RecR (201 aa).

Residues 57-72 form a C4-type zinc finger; sequence CECCRTLTEEPLCRIC. Positions 81-176 constitute a Toprim domain; that stretch reads GVLCIVETPA…NTTRIAHGVP (96 aa).

The protein belongs to the RecR family.

Functionally, may play a role in DNA repair. It seems to be involved in an RecBC-independent recombinational process of DNA repair. It may act with RecF and RecO. The chain is Recombination protein RecR from Idiomarina loihiensis (strain ATCC BAA-735 / DSM 15497 / L2-TR).